A 319-amino-acid chain; its full sequence is Probable alcohol dehydrogenase (319 aa).

The Zn(2+) site is built by Cys-18, His-39, Cys-68, Cys-71, Cys-74, Cys-82, and Cys-149.

Belongs to the zinc-containing alcohol dehydrogenase family. It depends on Zn(2+) as a cofactor.

It catalyses the reaction a primary alcohol + NAD(+) = an aldehyde + NADH + H(+). The enzyme catalyses a secondary alcohol + NAD(+) = a ketone + NADH + H(+). The protein is Probable alcohol dehydrogenase (terPD) of Pseudomonas sp.